The chain runs to 104 residues: Toxin-like protein 14 (104 aa).

A signal peptide spans 1-25; that stretch reads MNTYNARLYIFSLALALVILKGTKC.

Contains 4 disulfide bonds. As to expression, expressed by the venom gland.

Its subcellular location is the secreted. This Urodacus yaschenkoi (Inland robust scorpion) protein is Toxin-like protein 14.